We begin with the raw amino-acid sequence, 332 residues long: Oligopeptide transport ATP-binding protein OppF (332 aa).

In terms of domain architecture, ABC transporter spans 23-264 (KNDKSLFFAK…TKHPYTKALM (242 aa)). 56–63 (GESGCGKS) is a binding site for ATP.

Belongs to the ABC transporter superfamily. In terms of assembly, the complex is composed of two ATP-binding proteins (OppD and OppF), two transmembrane proteins (OppB and OppC) and a solute-binding protein (OppA).

It localises to the cell inner membrane. It carries out the reaction a [peptide](out) + ATP + H2O = a [peptide](in) + ADP + phosphate + H(+). Functionally, part of the ABC transporter complex OppABCDF involved in the uptake of oligopeptides. Probably responsible for energy coupling to the transport system. In Haemophilus influenzae (strain ATCC 51907 / DSM 11121 / KW20 / Rd), this protein is Oligopeptide transport ATP-binding protein OppF (oppF).